Reading from the N-terminus, the 95-residue chain is Small ribosomal subunit protein uS19 (95 aa).

This sequence belongs to the universal ribosomal protein uS19 family.

Protein S19 forms a complex with S13 that binds strongly to the 16S ribosomal RNA. The chain is Small ribosomal subunit protein uS19 from Myxococcus xanthus (strain DK1622).